The primary structure comprises 162 residues: Lipoprotein signal peptidase (162 aa).

4 helical membrane passes run 12–32 (WFALAALVIVLDQISKLYFNS), 42–62 (VVEGFFNFTLVYNPGAAFSFL), 66–86 (GGWQKYLFTILAFAVSGWLGW), and 93–113 (FSGLMNLAAAFIMGGALGNVI). Active-site residues include Asp123 and Asp142. The helical transmembrane segment at 133–153 (WYYPAFNLADSFICVGAALMV) threads the bilayer.

Belongs to the peptidase A8 family.

The protein resides in the cell inner membrane. It catalyses the reaction Release of signal peptides from bacterial membrane prolipoproteins. Hydrolyzes -Xaa-Yaa-Zaa-|-(S,diacylglyceryl)Cys-, in which Xaa is hydrophobic (preferably Leu), and Yaa (Ala or Ser) and Zaa (Gly or Ala) have small, neutral side chains.. Its pathway is protein modification; lipoprotein biosynthesis (signal peptide cleavage). Its function is as follows. This protein specifically catalyzes the removal of signal peptides from prolipoproteins. In Chromobacterium violaceum (strain ATCC 12472 / DSM 30191 / JCM 1249 / CCUG 213 / NBRC 12614 / NCIMB 9131 / NCTC 9757 / MK), this protein is Lipoprotein signal peptidase.